We begin with the raw amino-acid sequence, 363 residues long: Neurogenic differentiation factor 2 (363 aa).

The disordered stretch occupies residues 1 to 116 (MLTRLFKEPS…VRRQKANARE (116 aa)). Positions 28–44 (EDSKTKDEEQERCRLGD) are enriched in basic and acidic residues. The span at 64–83 (AGEEDYDEDVDEDDCGEEGD) shows a compositional bias: acidic residues. The segment covering 87-98 (PKKRGPKKRKMT) has biased composition (basic residues). Positions 93-99 (KKRKMTP) match the Nuclear localization signal motif. The region spanning 107 to 159 (VRRQKANARERTRMHDLNSALDNLLKVVPCYSKTQKLSKIETLRLAKNYIWAL) is the bHLH domain.

Efficient DNA binding requires dimerization with another bHLH protein. As to expression, in adult, expressed strongly in brain and more weakly in skin, muscle, eye and ovary.

It is found in the nucleus. Transcriptional regulator. Appears to mediate neuronal differentiation. This Danio rerio (Zebrafish) protein is Neurogenic differentiation factor 2.